Reading from the N-terminus, the 250-residue chain is 5-oxoprolinase subunit A (250 aa).

The protein belongs to the LamB/PxpA family. In terms of assembly, forms a complex composed of PxpA, PxpB and PxpC.

It carries out the reaction 5-oxo-L-proline + ATP + 2 H2O = L-glutamate + ADP + phosphate + H(+). Catalyzes the cleavage of 5-oxoproline to form L-glutamate coupled to the hydrolysis of ATP to ADP and inorganic phosphate. The protein is 5-oxoprolinase subunit A of Staphylococcus aureus (strain NCTC 8325 / PS 47).